The sequence spans 521 residues: Sphingolipid C9-methyltransferase 2 (521 aa).

The next 2 membrane-spanning stretches (helical) occupy residues 60 to 80 (VLIS…GGGF) and 85 to 105 (FFAI…ISAI). Residues 225 to 226 (YT), 262 to 270 (MLDIGCGWG), 288 to 293 (TLGRNQ), and 318 to 319 (YR) each bind S-adenosyl-L-methionine.

Belongs to the CFA/CMAS family.

It is found in the membrane. The catalysed reaction is a (4E,8E)-4-sphinga-4,8-dienine ceramide + S-adenosyl-L-methionine = a 9-methyl-(4E,8E)-sphinga-4,8-dienine ceramide + S-adenosyl-L-homocysteine + H(+). Its pathway is lipid metabolism; sphingolipid metabolism. Functionally, catalyzes methylation of the sphingoid base component of glucosylceramides (GluCers) at the C9-position. Sphingolipid C9-methylation requires 4,8-desaturated ceramides as substrates. Glucosylceramides play important roles in growth, differentiation and pathogenicity. The methyl group at the C9-position distinguishes fungal glucosylceramides from those of plants and animals and may thus play a role in host-pathogen interactions enabling the host to recognize the fungal attack and initiate specific defense responses. However, C-9 methylation of GlcCers is not essential for the sensitivity of F.graminearum to plant defensins MsDef1 and RsAFP2. This chain is Sphingolipid C9-methyltransferase 2, found in Gibberella zeae (strain ATCC MYA-4620 / CBS 123657 / FGSC 9075 / NRRL 31084 / PH-1) (Wheat head blight fungus).